Reading from the N-terminus, the 199-residue chain is MALNGADVDDFTWEPPTEAETKVLQARRERQDRISRLMGDYLLRGYRMLGDTCADCGTILLQDKQRKIYCVACQELDSDVDKDNPALNAQAALSQAREHQLASSTEPASSSRPPSQPPVPRPEHCEGAAAGLKAAQAPPLPAAPPNTDAVASTQTALLQKLTWASVELGSSTSLETSIQLCGLIRACAEALGSLKQLDH.

The residue at position 2 (alanine 2) is an N-acetylalanine. Residues cysteine 53, cysteine 56, cysteine 70, and cysteine 73 each contribute to the Zn(2+) site. A disordered region spans residues 93 to 148 (LSQAREHQLASSTEPASSSRPPSQPPVPRPEHCEGAAAGLKAAQAPPLPAAPPNTD). Serine 94 carries the post-translational modification Phosphoserine. Low complexity predominate over residues 127–137 (GAAAGLKAAQA). Residues 173-194 (SLETSIQLCGLIRACAEALGSL) carry the Nuclear export signal motif.

In terms of assembly, homodimer. Zn(2+) is required as a cofactor. In terms of tissue distribution, expressed in the early postnatal brain.

It is found in the cytoplasm. Its function is as follows. Might play a role in mitosis. Could be a centromere-associated protein. Antigenic molecule. May induce anti-centromere antibodies. This chain is Protein ZNRD2 (Znrd2), found in Mus musculus (Mouse).